A 443-amino-acid polypeptide reads, in one-letter code: Mitochondrial enolase superfamily member 1 (443 aa).

Residues 24-26 (GSD) and Tyr34 each bind substrate. Position 148 is a phosphoserine (Ser148). Lys220 serves as a coordination point for substrate. Lys222 acts as the Proton donor/acceptor in catalysis. Asp250 lines the Mg(2+) pocket. Residues Asn252, Glu276, Glu305, 355–357 (HAG), and Glu386 contribute to the substrate site. Mg(2+) contacts are provided by Glu276 and Glu305. The active site involves His355.

Belongs to the mandelate racemase/muconate lactonizing enzyme family. ENOSF1 subfamily. Mg(2+) serves as cofactor. Could be sumoylated.

It localises to the mitochondrion. The enzyme catalyses L-fuconate = 2-dehydro-3-deoxy-L-fuconate + H2O. Plays a role in the catabolism of L-fucose, a sugar that is part of the carbohydrates that are attached to cellular glycoproteins. Catalyzes the dehydration of L-fuconate to 2-keto-3-deoxy-L-fuconate by the abstraction of the 2-proton to generate an enediolate intermediate that is stabilized by the magnesium ion. May down-regulate thymidylate synthase activity, possibly already at the RNA level, by promoting the degradation of TYMS mRNA via an antisense RNA-based mechanism. The protein is Mitochondrial enolase superfamily member 1 (ENOSF1) of Bos taurus (Bovine).